The sequence spans 260 residues: ProSAAS (260 aa).

An N-terminal signal peptide occupies residues 1–33; the sequence is MAGSPLLWGPRAGGVGLLVLLLLGLFRPPPALC. Residues 34–215 are proSAAS(1-180); the sequence is ARPVKEPRGL…SADSEGVAAP (182 aa). The O-linked (GalNAc...) threonine glycan is linked to threonine 53. A disordered region spans residues 165–188; the sequence is RPRPPVYDDGPAGPDAEEAGDETP. The span at 179–188 shows a compositional bias: acidic residues; that stretch reads DAEEAGDETP. The C-terminal inhibitory domain; interacts with PCSK1 stretch occupies residues 221–260; it reads AADHDVGSELPPEGVLGALLRVKRLETPAPQVPARRLLPP. O-linked (GalNAc...) serine glycosylation is present at serine 228. The Sufficient for inhibition of PCSK1 signature appears at 239 to 244; the sequence is LLRVKR. O-linked (GalNAc...) threonine glycosylation occurs at threonine 247.

As to quaternary structure, interacts via the C-terminal inhibitory domain with PCSK1 66 kDa form. In terms of processing, proteolytically cleaved in the Golgi. Post-translationally, O-glycosylated with a core 1 or possibly core 8 glycan. Expressed in brain and pancreas.

It localises to the secreted. Its subcellular location is the golgi apparatus. It is found in the trans-Golgi network. May function in the control of the neuroendocrine secretory pathway. Proposed be a specific endogenous inhibitor of PCSK1. ProSAAS and Big PEN-LEN, both containing the C-terminal inhibitory domain, but not the further processed peptides reduce PCSK1 activity in the endoplasmic reticulum and Golgi. It reduces the activity of the 84 kDa form but not the autocatalytically derived 66 kDa form of PCSK1. Subsequent processing of proSAAS may eliminate the inhibition. Slows down convertase-mediated processing of proopiomelanocortin and proenkephalin. May control the intracellular timing of PCSK1 rather than its total level of activity. Functionally, endogenous ligand for GPR171. Neuropeptide involved in the regulation of feeding. This Homo sapiens (Human) protein is ProSAAS (PCSK1N).